The chain runs to 874 residues: Alanine--tRNA ligase (874 aa).

Zn(2+) is bound by residues His-563, His-567, Cys-665, and His-669.

It belongs to the class-II aminoacyl-tRNA synthetase family. The cofactor is Zn(2+).

The protein resides in the cytoplasm. It catalyses the reaction tRNA(Ala) + L-alanine + ATP = L-alanyl-tRNA(Ala) + AMP + diphosphate. Its function is as follows. Catalyzes the attachment of alanine to tRNA(Ala) in a two-step reaction: alanine is first activated by ATP to form Ala-AMP and then transferred to the acceptor end of tRNA(Ala). Also edits incorrectly charged Ser-tRNA(Ala) and Gly-tRNA(Ala) via its editing domain. The polypeptide is Alanine--tRNA ligase (Actinobacillus succinogenes (strain ATCC 55618 / DSM 22257 / CCUG 43843 / 130Z)).